Here is a 149-residue protein sequence, read N- to C-terminus: uncharacterized protein (149 aa).

This is an uncharacterized protein from Aquifex aeolicus (strain VF5).